Here is a 413-residue protein sequence, read N- to C-terminus: Argininosuccinate synthase (413 aa).

ATP-binding positions include Ala-12–Ser-20 and Ala-39. L-citrulline-binding residues include Tyr-92 and Ser-97. Gly-122 is an ATP binding site. L-aspartate contacts are provided by Thr-124, Asn-128, and Asp-129. Asn-128 provides a ligand contact to L-citrulline. L-citrulline-binding residues include Arg-132, Ser-189, Ser-198, Glu-274, and Tyr-286.

This sequence belongs to the argininosuccinate synthase family. Type 1 subfamily. Homotetramer.

Its subcellular location is the cytoplasm. It carries out the reaction L-citrulline + L-aspartate + ATP = 2-(N(omega)-L-arginino)succinate + AMP + diphosphate + H(+). Its pathway is amino-acid biosynthesis; L-arginine biosynthesis; L-arginine from L-ornithine and carbamoyl phosphate: step 2/3. The polypeptide is Argininosuccinate synthase (Aliarcobacter butzleri (strain RM4018) (Arcobacter butzleri)).